Consider the following 207-residue polypeptide: MNLKEELKAGLAELGLALSAPQELLLVHYVELLDKWNRVYNLTAVRETGRMLSYHVLDSLAALPLVAGQRILDVGSGGGMPGIPFAISQPDWSLTLLDANHKKTTFLKQAVIELGLTNTEVVCERVEAFQPERKFDVITSRAFSDLAEFVRLTRHLLAEGGEWAALKGVYPDEEIAQLPEDVCVREVIELKVPGLDAERHLVKLGLR.

Residues Gly75, Met80, 126 to 127, and Arg141 contribute to the S-adenosyl-L-methionine site; that span reads VE.

It belongs to the methyltransferase superfamily. RNA methyltransferase RsmG family.

The protein resides in the cytoplasm. The catalysed reaction is guanosine(527) in 16S rRNA + S-adenosyl-L-methionine = N(7)-methylguanosine(527) in 16S rRNA + S-adenosyl-L-homocysteine. Its function is as follows. Specifically methylates the N7 position of guanine in position 527 of 16S rRNA. The polypeptide is Ribosomal RNA small subunit methyltransferase G (Laribacter hongkongensis (strain HLHK9)).